The primary structure comprises 556 residues: Potassium-transporting ATPase potassium-binding subunit (556 aa).

10 consecutive transmembrane segments (helical) span residues 6-26, 65-85, 133-153, 176-196, 249-269, 283-303, 378-398, 419-439, 483-503, and 526-546; these read AGLI…VPLG, GVLA…LVQG, GLAV…VALV, LRIL…GGAI, PTAW…FSLP, YAIA…MLWF, GLYG…LMVG, YFLV…ALPG, ALGL…LALA, and FVGM…LPML.

It belongs to the KdpA family. In terms of assembly, the system is composed of three essential subunits: KdpA, KdpB and KdpC.

It is found in the cell membrane. In terms of biological role, part of the high-affinity ATP-driven potassium transport (or Kdp) system, which catalyzes the hydrolysis of ATP coupled with the electrogenic transport of potassium into the cytoplasm. This subunit binds the extracellular potassium ions and delivers the ions to the membrane domain of KdpB through an intramembrane tunnel. In Mycobacterium avium (strain 104), this protein is Potassium-transporting ATPase potassium-binding subunit.